Reading from the N-terminus, the 160-residue chain is Inorganic pyrophosphatase (160 aa).

Substrate contacts are provided by Lys16, Arg28, and Tyr40. The Mg(2+) site is built by Asp50, Asp55, and Asp87. Tyr126 is a binding site for substrate.

It belongs to the PPase family. In terms of assembly, homohexamer. It depends on Mg(2+) as a cofactor.

The protein resides in the cytoplasm. The catalysed reaction is diphosphate + H2O = 2 phosphate + H(+). Functionally, catalyzes the hydrolysis of inorganic pyrophosphate (PPi) forming two phosphate ions. The chain is Inorganic pyrophosphatase from Nanoarchaeum equitans (strain Kin4-M).